The primary structure comprises 801 residues: Phenylalanine--tRNA ligase beta subunit (801 aa).

The tRNA-binding domain occupies 39-153; that stretch reads AEGLSKLVVG…EEAVPGDAIF (115 aa). One can recognise a B5 domain in the interval 406–481; it reads TEPVEVSTSL…RIYGYDKLPT (76 aa). Residues Asp459, Asp465, Glu468, and Glu469 each coordinate Mg(2+). Residues 708–801 enclose the FDX-ACB domain; sequence TKFPAMTRDI…LTEQVGAEVR (94 aa).

The protein belongs to the phenylalanyl-tRNA synthetase beta subunit family. Type 1 subfamily. Tetramer of two alpha and two beta subunits. Requires Mg(2+) as cofactor.

The protein resides in the cytoplasm. The enzyme catalyses tRNA(Phe) + L-phenylalanine + ATP = L-phenylalanyl-tRNA(Phe) + AMP + diphosphate + H(+). This chain is Phenylalanine--tRNA ligase beta subunit, found in Streptococcus pyogenes serotype M18 (strain MGAS8232).